Consider the following 73-residue polypeptide: MRFTSMIFVLVVILINSLFNFNVLASSVIETTKNDVCSTPCTRRYGTYECWHDCLHERYNDGGCVDGRCCCKK.

Residues Met1–Ala25 form the signal peptide. 4 disulfides stabilise this stretch: Cys37/Cys71, Cys41/Cys64, Cys50/Cys69, and Cys54/Cys70.

This sequence belongs to the DEFL family.

Its subcellular location is the secreted. The polypeptide is Putative defensin-like protein 57 (Arabidopsis thaliana (Mouse-ear cress)).